The sequence spans 138 residues: Large ribosomal subunit protein uL16 (138 aa).

Residues 1–15 are compositionally biased toward basic residues; sequence MLSPKKVKYRKKQRG. Residues 1–21 form a disordered region; it reads MLSPKKVKYRKKQRGRLSGEA.

Belongs to the universal ribosomal protein uL16 family. In terms of assembly, part of the 50S ribosomal subunit.

Its function is as follows. Binds 23S rRNA and is also seen to make contacts with the A and possibly P site tRNAs. In Borrelia garinii subsp. bavariensis (strain ATCC BAA-2496 / DSM 23469 / PBi) (Borreliella bavariensis), this protein is Large ribosomal subunit protein uL16.